The sequence spans 316 residues: MTTAALQTQLQGYLDYLIIERSIAANTLSSYRRDLIRYSKHLSDRGIEDLAKVGEHDVSEFLVALRRGDPDSGVAALSAVSAARALIAVRGLHRFAVAEGLVDLDVARAVRPPTPGRRLPKSLTVDEVLALLESVGGESRADGPLVLRNRALLELLYSTGSRISEAVGLDVDDVDTQARTVLLQGKGGKQRLVPVGRPAVQALDAYLVRGRSDLARRGPGMLATPAIFLNARGGRLSRQSAWQVLQDAAEHAGITSGVSPHMLRHSFATHLLEGGADIRVVQELMGHASVTTTQIYTLVTVQALREVWAGAHPRAK.

Residues Ala4–Val97 form the Core-binding (CB) domain. The Tyr recombinase domain occupies Arg118–Ala309. Active-site residues include Arg162, Lys186, His261, Arg264, and His287. Residue Tyr296 is the O-(3'-phospho-DNA)-tyrosine intermediate of the active site.

The protein belongs to the 'phage' integrase family. XerD subfamily. Forms a cyclic heterotetrameric complex composed of two molecules of XerC and two molecules of XerD.

It localises to the cytoplasm. Its function is as follows. Site-specific tyrosine recombinase, which acts by catalyzing the cutting and rejoining of the recombining DNA molecules. The XerC-XerD complex is essential to convert dimers of the bacterial chromosome into monomers to permit their segregation at cell division. It also contributes to the segregational stability of plasmids. The protein is Tyrosine recombinase XerD of Mycobacterium leprae (strain TN).